The sequence spans 501 residues: Aldehyde dehydrogenase 1A1 (501 aa).

Ser2 carries the post-translational modification N-acetylserine. N6-acetyllysine occurs at positions 91 and 128. NAD(+) contacts are provided by residues 167-170 (LPWN), 193-196 (KPAE), 226-227 (GP), and 246-247 (GS). Residue Lys252 is modified to N6-acetyllysine. Glu269 serves as the catalytic Proton acceptor. 269–271 (ELG) contributes to the NAD(+) binding site. Catalysis depends on Cys303, which acts as the Nucleophile. The interval 336–501 (LTPGVSQGPQ…VTVKISQKNS (166 aa)) is mediates interaction with PRMT3. The residue at position 337 (Thr337) is a Phosphothreonine. 349–353 (EQYDK) is a binding site for NAD(+). 2 positions are modified to N6-acetyllysine: Lys353 and Lys367. 400-402 (EIF) lines the NAD(+) pocket. Lys410 is modified (N6-acetyllysine). At Ser413 the chain carries Phosphoserine. 3 positions are modified to N6-acetyllysine: Lys419, Lys435, and Lys495.

This sequence belongs to the aldehyde dehydrogenase family. In terms of assembly, homotetramer. Interacts with PRMT3; the interaction is direct, inhibits ALDH1A1 aldehyde dehydrogenase activity and is independent of the methyltransferase activity of PRMT3. Post-translationally, the N-terminus is blocked most probably by acetylation.

It localises to the cytoplasm. It is found in the cytosol. The protein localises to the cell projection. The protein resides in the axon. It carries out the reaction an aldehyde + NAD(+) + H2O = a carboxylate + NADH + 2 H(+). The catalysed reaction is all-trans-retinal + NAD(+) + H2O = all-trans-retinoate + NADH + 2 H(+). The enzyme catalyses 9-cis-retinal + NAD(+) + H2O = 9-cis-retinoate + NADH + 2 H(+). It catalyses the reaction 11-cis-retinal + NAD(+) + H2O = 11-cis-retinoate + NADH + 2 H(+). It carries out the reaction 13-cis-retinal + NAD(+) + H2O = 13-cis-retinoate + NADH + 2 H(+). The catalysed reaction is 3-deoxyglucosone + NAD(+) + H2O = 2-dehydro-3-deoxy-D-gluconate + NADH + 2 H(+). The enzyme catalyses (E)-4-hydroxynon-2-enal + NAD(+) + H2O = (E)-4-hydroxynon-2-enoate + NADH + 2 H(+). It catalyses the reaction malonaldehyde + NAD(+) + H2O = 3-oxopropanoate + NADH + 2 H(+). It carries out the reaction hexanal + NAD(+) + H2O = hexanoate + NADH + 2 H(+). The catalysed reaction is propanal + NAD(+) + H2O = propanoate + NADH + 2 H(+). The enzyme catalyses acetaldehyde + NAD(+) + H2O = acetate + NADH + 2 H(+). It catalyses the reaction benzaldehyde + NAD(+) + H2O = benzoate + NADH + 2 H(+). It carries out the reaction 4-aminobutanal + NAD(+) + H2O = 4-aminobutanoate + NADH + 2 H(+). Its pathway is cofactor metabolism; retinol metabolism. Functionally, cytosolic dehydrogenase that catalyzes the irreversible oxidation of a wide range of aldehydes to their corresponding carboxylic acid. Functions downstream of retinol dehydrogenases and catalyzes the oxidation of retinaldehyde into retinoic acid, the second step in the oxidation of retinol/vitamin A into retinoic acid. This pathway is crucial to control the levels of retinol and retinoic acid, two important molecules which excess can be teratogenic and cytotoxic. Also oxidizes aldehydes resulting from lipid peroxidation like (E)-4-hydroxynon-2-enal/HNE, malonaldehyde and hexanal that form protein adducts and are highly cytotoxic. By participating for instance to the clearance of (E)-4-hydroxynon-2-enal/HNE in the lens epithelium prevents the formation of HNE-protein adducts and lens opacification. Also functions downstream of fructosamine-3-kinase in the fructosamine degradation pathway by catalyzing the oxidation of 3-deoxyglucosone, the carbohydrate product of fructosamine 3-phosphate decomposition, which is itself a potent glycating agent that may react with lysine and arginine side-chains of proteins. Also has an aminobutyraldehyde dehydrogenase activity and is probably part of an alternative pathway for the biosynthesis of GABA/4-aminobutanoate in midbrain, thereby playing a role in GABAergic synaptic transmission. This chain is Aldehyde dehydrogenase 1A1, found in Equus caballus (Horse).